Consider the following 147-residue polypeptide: 3-dehydroquinate dehydratase (147 aa).

The active-site Proton acceptor is the Y25. Residues N76, H82, and D89 each coordinate substrate. The active-site Proton donor is H102. Substrate is bound by residues 103–104 and R113; that span reads LS.

Belongs to the type-II 3-dehydroquinase family. As to quaternary structure, homododecamer.

It catalyses the reaction 3-dehydroquinate = 3-dehydroshikimate + H2O. It functions in the pathway metabolic intermediate biosynthesis; chorismate biosynthesis; chorismate from D-erythrose 4-phosphate and phosphoenolpyruvate: step 3/7. Its function is as follows. Catalyzes a trans-dehydration via an enolate intermediate. This chain is 3-dehydroquinate dehydratase, found in Nostoc sp. (strain PCC 7120 / SAG 25.82 / UTEX 2576).